Reading from the N-terminus, the 516-residue chain is Gastrula zinc finger protein XlCGF53.1 (516 aa).

Disordered stretches follow at residues 1-33 (MGMW…GKKE) and 200-220 (GNQS…TDKP). Over residues 200–218 (GNQSDCSINPLTEQIQGTD) the composition is skewed to polar residues. C2H2-type zinc fingers lie at residues 312 to 334 (YICS…QKTH), 354 to 376 (FPCS…QSSH), 382 to 404 (YACS…LKLH), 410 to 432 (FPCS…RRVH), 438 to 460 (YSCS…QRTH), 466 to 488 (FSCT…HRTH), and 494 to 516 (FSCT…HRTH).

Belongs to the krueppel C2H2-type zinc-finger protein family.

It is found in the nucleus. Functionally, may be involved in transcriptional regulation. This chain is Gastrula zinc finger protein XlCGF53.1, found in Xenopus laevis (African clawed frog).